Here is a 207-residue protein sequence, read N- to C-terminus: Large ribosomal subunit protein uL3c (207 aa).

Positions 128 to 148 (FTRGPMTHGSKNHRAPGSIGM) are disordered.

This sequence belongs to the universal ribosomal protein uL3 family. Part of the 50S ribosomal subunit.

The protein localises to the plastid. Its subcellular location is the chloroplast. One of the primary rRNA binding proteins, it binds directly near the 3'-end of the 23S rRNA, where it nucleates assembly of the 50S subunit. This is Large ribosomal subunit protein uL3c (rpl3) from Trieres chinensis (Marine centric diatom).